Consider the following 273-residue polypeptide: Petrobactin import ATP-binding protein FpuD (273 aa).

Residues Leu-5–Glu-241 form the ABC transporter domain. Gly-37–Ser-44 is a binding site for ATP.

It belongs to the ABC transporter superfamily. The complex is composed of two ATP-binding proteins (FpuD), two transmembrane proteins (FpuB) and a solute-binding protein (FpuA).

The protein resides in the cell membrane. The enzyme catalyses a Fe(III)-siderophore(out) + ATP + H2O = a Fe(III)-siderophore(in) + ADP + phosphate + H(+). Its function is as follows. Part of an ABC transporter complex involved in ferric-petrobactin uptake. Probably responsible for energy coupling to the transport system. The sequence is that of Petrobactin import ATP-binding protein FpuD from Bacillus anthracis.